The sequence spans 348 residues: tRNA N6-adenosine threonylcarbamoyltransferase (348 aa).

Positions 109 and 113 each coordinate Fe cation. Residues 136–140, D169, G182, D186, and N284 contribute to the substrate site; that span reads TVSGG. D312 serves as a coordination point for Fe cation.

Belongs to the KAE1 / TsaD family. The cofactor is Fe(2+).

The protein localises to the cytoplasm. It catalyses the reaction L-threonylcarbamoyladenylate + adenosine(37) in tRNA = N(6)-L-threonylcarbamoyladenosine(37) in tRNA + AMP + H(+). In terms of biological role, required for the formation of a threonylcarbamoyl group on adenosine at position 37 (t(6)A37) in tRNAs that read codons beginning with adenine. Is involved in the transfer of the threonylcarbamoyl moiety of threonylcarbamoyl-AMP (TC-AMP) to the N6 group of A37, together with TsaE and TsaB. TsaD likely plays a direct catalytic role in this reaction. This Chlorobium luteolum (strain DSM 273 / BCRC 81028 / 2530) (Pelodictyon luteolum) protein is tRNA N6-adenosine threonylcarbamoyltransferase.